The chain runs to 241 residues: Uracil-DNA glycosylase (241 aa).

Catalysis depends on Asp71, which acts as the Proton acceptor.

It belongs to the uracil-DNA glycosylase (UDG) superfamily. UNG family.

The protein localises to the cytoplasm. The catalysed reaction is Hydrolyzes single-stranded DNA or mismatched double-stranded DNA and polynucleotides, releasing free uracil.. Functionally, excises uracil residues from the DNA which can arise as a result of misincorporation of dUMP residues by DNA polymerase or due to deamination of cytosine. In Xanthomonas euvesicatoria pv. vesicatoria (strain 85-10) (Xanthomonas campestris pv. vesicatoria), this protein is Uracil-DNA glycosylase.